A 285-amino-acid polypeptide reads, in one-letter code: MSIKFKKVDYIYSPETPMEKKGLDNVSFELADNSFVALIGHTGSGKSTLMQHFNALLKPSAGVINIVGYHITPETSNKNLKRLRKKVSLVFQFPEVQLFENTVLEDIEFGPKNFGATEEEAKNKALKWMKKVGISEELASKSPFELSGGQMRRVAIAGVMAIEPQILCLDEPAAGLDPKSRHDMMQLFLDYQKAGHTVILVTHNMDDVAEYANDVLVMEKGKLIKHDTPENIFADRKWLKKHNLSEPVTGIFASELNNYKFLKNPLTIDQLIDGIKNNLEGEFYE.

The ABC transporter domain occupies 3-245 (IKFKKVDYIY…RKWLKKHNLS (243 aa)). Residue 40 to 47 (GHTGSGKS) coordinates ATP.

Belongs to the ABC transporter superfamily. Energy-coupling factor EcfA family. As to quaternary structure, forms a stable energy-coupling factor (ECF) transporter complex composed of 2 membrane-embedded substrate-binding proteins (S component), 2 ATP-binding proteins (A component) and 2 transmembrane proteins (T component).

Its subcellular location is the cell membrane. Its function is as follows. ATP-binding (A) component of a common energy-coupling factor (ECF) ABC-transporter complex. Unlike classic ABC transporters this ECF transporter provides the energy necessary to transport a number of different substrates. The protein is Energy-coupling factor transporter ATP-binding protein EcfA2 of Lactobacillus acidophilus (strain ATCC 700396 / NCK56 / N2 / NCFM).